A 331-amino-acid chain; its full sequence is Elongation factor Ts, mitochondrial (331 aa).

Positions Ser254–Arg295 are disordered. Residues Pro262 to Asp275 show a composition bias toward basic and acidic residues. The span at Lys276–Thr291 shows a compositional bias: acidic residues.

Belongs to the EF-Ts family.

It localises to the mitochondrion. In terms of biological role, associates with the EF-Tu.GDP complex and induces the exchange of GDP to GTP. It remains bound to the aminoacyl-tRNA.EF-Tu.GTP complex up to the GTP hydrolysis stage on the ribosome. The sequence is that of Elongation factor Ts, mitochondrial from Branchiostoma floridae (Florida lancelet).